The following is a 594-amino-acid chain: Arginine--tRNA ligase (594 aa).

The 'HIGH' region motif lies at 139 to 149 (ANPTGPLHVGH).

It belongs to the class-I aminoacyl-tRNA synthetase family. Monomer.

The protein localises to the cytoplasm. The catalysed reaction is tRNA(Arg) + L-arginine + ATP = L-arginyl-tRNA(Arg) + AMP + diphosphate. This chain is Arginine--tRNA ligase, found in Paraburkholderia phymatum (strain DSM 17167 / CIP 108236 / LMG 21445 / STM815) (Burkholderia phymatum).